Here is a 196-residue protein sequence, read N- to C-terminus: Nodulation protein A (196 aa).

This sequence belongs to the NodA family.

It is found in the cytoplasm. Functionally, N-acyltransferase required for nodulation. Acts in the production of a small, heat-stable compound (Nod) that stimulates mitosis in various plant protoplasts. The sequence is that of Nodulation protein A from Sinorhizobium terangae.